A 984-amino-acid chain; its full sequence is Serine/threonine-protein kinase N2 (984 aa).

Ser21 carries the phosphoserine modification. Residues 33–109 (KLDFSDTMVQ…LQELNAHIVV (77 aa)) form the REM-1 1 domain. An N6-acetyllysine modification is found at Lys77. Ser110 bears the Phosphoserine mark. Residues 114–133 (DITDCPRTPDTPNNDPRCST) form a disordered region. Thr121 and Thr124 each carry phosphothreonine. 2 REM-1 domains span residues 121–203 (TPDT…TNEL) and 204–284 (AFDN…EVPK). A compositionally biased stretch (polar residues) spans 123–133 (DTPNNDPRCST). 4 positions are modified to phosphoserine: Ser302, Ser306, Ser360, and Ser362. Residues 351 to 383 (ATSVALPGWSPSETRSSFMSRTSKSKSGSSRNL) are disordered. The C2 domain maps to 353–473 (SVALPGWSPS…LYLEPQGTLF (121 aa)). Residues 364-381 (TRSSFMSRTSKSKSGSSR) show a composition bias toward low complexity. Positions 382–463 (NLLKTDDLSN…FLDNQRHGMC (82 aa)) are necessary to rescue apical junction formation. 3 positions are modified to phosphoserine: Ser535, Ser583, and Ser620. The interval 558-584 (ASDSTVTKLDFDLEPEPPPAPPRASSL) is disordered. At Thr628 the chain carries Phosphothreonine. Position 631 is a phosphoserine (Ser631). One can recognise a Protein kinase domain in the interval 657–916 (FRCCAVLGRG…AEDVKKHPFF (260 aa)). Residues 663–671 (LGRGHFGKV) and Lys686 contribute to the ATP site. Asp782 acts as the Proton acceptor in catalysis. At Thr816 the chain carries Phosphothreonine; by PDPK1. Residues 917 to 977 (RLIDWSALMD…EEEQEMFRDF (61 aa)) form a necessary for the catalytic activity region. An AGC-kinase C-terminal domain is found at 917-984 (RLIDWSALMD…RDFDYIADWC (68 aa)). At Ser952 the chain carries Phosphoserine. Thr958 carries the post-translational modification Phosphothreonine. Residues 978–984 (DYIADWC) form a negatively regulates the responsiveness of the catalytic activity by cardiolipin and is required for optimal activation by the GTP-bound RhoA region.

The protein belongs to the protein kinase superfamily. AGC Ser/Thr protein kinase family. PKC subfamily. In terms of assembly, interacts (via the REM repeats) with RHOA (GTP-bound form preferentially) and interacts (via the REM repeats) with RAC1 (GTP-bound form preferentially); the interactions induce its autophosphorylation. Interacts with RHOC. Interacts with NCK1 and NCK2. Interacts with NCK1 (via SH3 domains). Interacts with CD44. Interacts (via C-terminal kinase domain) with PDPK1; the interaction stimulates PDPK1 kinase activity. Interacts with MAP3K2; the interaction activates PRK2 kinase activity in a MAP3K2-independent kinase activity. Interacts (via C-terminal domain) with AKT1; the interaction occurs with the C-terminal cleavage product of PRK2 in apoptotic cells. Interacts (via C-terminus) with PTPN13 (via PDZ 3 domain). Interacts with CDK10. (Microbial infection) Interacts with HCV NS5B (via N-terminal finger domain). In terms of processing, autophosphorylated. Phosphorylated during mitosis. Phosphorylated by CDK10. Activated by limited proteolysis with trypsin. Proteolytically cleaved by caspase-3 during the induction of apoptotic cell death. As to expression, ubiquitous. Expressed in numerous tumor cell lines, especially in bladder tumor cells.

Its subcellular location is the cytoplasm. It localises to the nucleus. The protein localises to the membrane. The protein resides in the cell projection. It is found in the lamellipodium. Its subcellular location is the cytoskeleton. It localises to the cleavage furrow. The protein localises to the midbody. The protein resides in the cell junction. It carries out the reaction L-seryl-[protein] + ATP = O-phospho-L-seryl-[protein] + ADP + H(+). The enzyme catalyses L-threonyl-[protein] + ATP = O-phospho-L-threonyl-[protein] + ADP + H(+). Kinase activity is activated upon binding to GTP-bound Rhoa/Rac1 GTPases. Activated by caspase-3 (CASP3) cleavage during apoptosis. Activated by lipids, particularly cardiolipin and to a lesser extent by other acidic phospholipids and unsaturated fatty acids. Two specific sites, Thr-816 (activation loop of the kinase domain) and Thr-958 (turn motif), need to be phosphorylated for its full activation. Functionally, PKC-related serine/threonine-protein kinase and Rho/Rac effector protein that participates in specific signal transduction responses in the cell. Plays a role in the regulation of cell cycle progression, actin cytoskeleton assembly, cell migration, cell adhesion, tumor cell invasion and transcription activation signaling processes. Phosphorylates CTTN in hyaluronan-induced astrocytes and hence decreases CTTN ability to associate with filamentous actin. Phosphorylates HDAC5, therefore lead to impair HDAC5 import. Direct RhoA target required for the regulation of the maturation of primordial junctions into apical junction formation in bronchial epithelial cells. Required for G2/M phases of the cell cycle progression and abscission during cytokinesis in a ECT2-dependent manner. Stimulates FYN kinase activity that is required for establishment of skin cell-cell adhesion during keratinocytes differentiation. Regulates epithelial bladder cells speed and direction of movement during cell migration and tumor cell invasion. Inhibits Akt pro-survival-induced kinase activity. Mediates Rho protein-induced transcriptional activation via the c-fos serum response factor (SRF). Involved in the negative regulation of ciliogenesis. In terms of biological role, (Microbial infection) Phosphorylates HCV NS5B leading to stimulation of HCV RNA replication. This is Serine/threonine-protein kinase N2 (PKN2) from Homo sapiens (Human).